The following is a 282-amino-acid chain: Pantothenate synthetase (282 aa).

30 to 37 (MGNLHDGH) lines the ATP pocket. The active-site Proton donor is the His-37. Position 61 (Gln-61) interacts with (R)-pantoate. Residue Gln-61 coordinates beta-alanine. Residue 149-152 (GEKD) participates in ATP binding. Residue Gln-155 participates in (R)-pantoate binding. 186 to 189 (MSSR) is a binding site for ATP.

The protein belongs to the pantothenate synthetase family. Homodimer.

It localises to the cytoplasm. The enzyme catalyses (R)-pantoate + beta-alanine + ATP = (R)-pantothenate + AMP + diphosphate + H(+). It functions in the pathway cofactor biosynthesis; (R)-pantothenate biosynthesis; (R)-pantothenate from (R)-pantoate and beta-alanine: step 1/1. Its function is as follows. Catalyzes the condensation of pantoate with beta-alanine in an ATP-dependent reaction via a pantoyl-adenylate intermediate. This chain is Pantothenate synthetase, found in Alteromonas mediterranea (strain DSM 17117 / CIP 110805 / LMG 28347 / Deep ecotype).